The chain runs to 94 residues: Protein FAM24B (94 aa).

The signal sequence occupies residues 1 to 21; that stretch reads MPVIAGGILAALLLLIVVVLC.

The protein belongs to the FAM24 family.

Its subcellular location is the secreted. This is Protein FAM24B (FAM24B) from Homo sapiens (Human).